Here is a 259-residue protein sequence, read N- to C-terminus: Ditrans,polycis-undecaprenyl-diphosphate synthase ((2E,6E)-farnesyl-diphosphate specific) (259 aa).

The active site involves Asp32. Asp32 is a Mg(2+) binding site. Residues 33-36 (GNGR), Trp37, Arg45, His49, and 77-79 (STE) each bind substrate. Asn80 serves as the catalytic Proton acceptor. Residues Trp81, Arg83, Arg203, and 209–211 (RIS) each bind substrate. A Mg(2+)-binding site is contributed by Glu222.

It belongs to the UPP synthase family. Homodimer. Mg(2+) serves as cofactor.

The enzyme catalyses 8 isopentenyl diphosphate + (2E,6E)-farnesyl diphosphate = di-trans,octa-cis-undecaprenyl diphosphate + 8 diphosphate. Catalyzes the sequential condensation of isopentenyl diphosphate (IPP) with (2E,6E)-farnesyl diphosphate (E,E-FPP) to yield (2Z,6Z,10Z,14Z,18Z,22Z,26Z,30Z,34E,38E)-undecaprenyl diphosphate (di-trans,octa-cis-UPP). UPP is the precursor of glycosyl carrier lipid in the biosynthesis of bacterial cell wall polysaccharide components such as peptidoglycan and lipopolysaccharide. This is Ditrans,polycis-undecaprenyl-diphosphate synthase ((2E,6E)-farnesyl-diphosphate specific) (uppS) from Lactiplantibacillus plantarum (strain ATCC BAA-793 / NCIMB 8826 / WCFS1) (Lactobacillus plantarum).